The following is an 829-amino-acid chain: Leucine--tRNA ligase (829 aa).

The 'HIGH' region motif lies at 40 to 50 (PYPSGNIHMGH). Positions 581-585 (KMSKS) match the 'KMSKS' region motif. An ATP-binding site is contributed by K584.

Belongs to the class-I aminoacyl-tRNA synthetase family.

The protein localises to the cytoplasm. It carries out the reaction tRNA(Leu) + L-leucine + ATP = L-leucyl-tRNA(Leu) + AMP + diphosphate. This is Leucine--tRNA ligase from Nitratidesulfovibrio vulgaris (strain DP4) (Desulfovibrio vulgaris).